Here is a 151-residue protein sequence, read N- to C-terminus: Probable cGMP 3',5'-cyclic phosphodiesterase subunit delta (151 aa).

This sequence belongs to the PDE6D/unc-119 family. As to quaternary structure, interacts with Pde6.

The protein localises to the nucleus. The protein resides in the cytoplasm. This chain is Probable cGMP 3',5'-cyclic phosphodiesterase subunit delta, found in Drosophila erecta (Fruit fly).